Reading from the N-terminus, the 229-residue chain is 23 kDa piroplasm membrane protein (229 aa).

Positions 1 to 19 (MNKYFKVFFFVLLTHALKS) are cleaved as a signal peptide. Residues 20-203 (ALIFGQATLQ…EKEDTNKKKY (184 aa)) are Extracellular-facing. The helical transmembrane segment at 204-224 (VLMVVVVVVFVVVASLVVFLV) threads the bilayer. At 225–229 (KFCLK) the chain is on the cytoplasmic side.

Its subcellular location is the membrane. This chain is 23 kDa piroplasm membrane protein, found in Theileria parva (East coast fever infection agent).